A 489-amino-acid chain; its full sequence is 3-octaprenyl-4-hydroxybenzoate carboxy-lyase (489 aa).

N172 serves as a coordination point for Mn(2+). Residues 175–177 (VYR), 189–191 (RWL), and 194–195 (RG) each bind prenylated FMN. A Mn(2+)-binding site is contributed by E240. D288 serves as the catalytic Proton donor.

This sequence belongs to the UbiD family. In terms of assembly, homohexamer. It depends on prenylated FMN as a cofactor. Mn(2+) is required as a cofactor.

It localises to the cell membrane. It carries out the reaction a 4-hydroxy-3-(all-trans-polyprenyl)benzoate + H(+) = a 2-(all-trans-polyprenyl)phenol + CO2. It participates in cofactor biosynthesis; ubiquinone biosynthesis. In terms of biological role, catalyzes the decarboxylation of 3-octaprenyl-4-hydroxy benzoate to 2-octaprenylphenol, an intermediate step in ubiquinone biosynthesis. This chain is 3-octaprenyl-4-hydroxybenzoate carboxy-lyase, found in Wigglesworthia glossinidia brevipalpis.